Consider the following 97-residue polypeptide: Cobalt transport protein CbiN (97 aa).

2 helical membrane-spanning segments follow: residues 6-26 (VLMI…YSGL) and 68-88 (SLLF…FFGY).

This sequence belongs to the CbiN family. In terms of assembly, forms an energy-coupling factor (ECF) transporter complex composed of an ATP-binding protein (A component, CbiO), a transmembrane protein (T component, CbiQ) and 2 possible substrate-capture proteins (S components, CbiM and CbiN) of unknown stoichimetry.

Its subcellular location is the cell membrane. It functions in the pathway cofactor biosynthesis; adenosylcobalamin biosynthesis. Its function is as follows. Part of the energy-coupling factor (ECF) transporter complex CbiMNOQ involved in cobalt import. In Methanococcus maripaludis (strain C5 / ATCC BAA-1333), this protein is Cobalt transport protein CbiN.